A 95-amino-acid chain; its full sequence is Small ribosomal subunit protein bS18 (95 aa).

This sequence belongs to the bacterial ribosomal protein bS18 family. Part of the 30S ribosomal subunit. Forms a tight heterodimer with protein bS6.

Its function is as follows. Binds as a heterodimer with protein bS6 to the central domain of the 16S rRNA, where it helps stabilize the platform of the 30S subunit. This chain is Small ribosomal subunit protein bS18, found in Rickettsia canadensis (strain McKiel).